The sequence spans 528 residues: Peptide chain release factor 3 (528 aa).

The tr-type G domain maps to 10 to 278 (DRRRTFGIIS…AFVQMAPPPH (269 aa)). GTP contacts are provided by residues 19 to 26 (SHPDAGKT), 87 to 91 (DTPGH), and 141 to 144 (NKLD).

Belongs to the TRAFAC class translation factor GTPase superfamily. Classic translation factor GTPase family. PrfC subfamily.

It localises to the cytoplasm. In terms of biological role, increases the formation of ribosomal termination complexes and stimulates activities of RF-1 and RF-2. It binds guanine nucleotides and has strong preference for UGA stop codons. It may interact directly with the ribosome. The stimulation of RF-1 and RF-2 is significantly reduced by GTP and GDP, but not by GMP. The protein is Peptide chain release factor 3 of Syntrophobacter fumaroxidans (strain DSM 10017 / MPOB).